Reading from the N-terminus, the 934-residue chain is Translation initiation factor IF-2 (934 aa).

Positions 54 to 323 (AQESKPTTPP…KRQKRNEYEA (270 aa)) are disordered. 4 stretches are compositionally biased toward low complexity: residues 80-154 (PKPG…AGKP), 185-197 (RGGA…PRPG), 206-231 (GQAP…PGAA), and 238-250 (RPSP…TPSP). Residues 260–303 (GFGGGRGRGGRPGGPGGPGGPGGPGPRGGRGGRRGGTAGAFGRP) are compositionally biased toward gly residues. The segment covering 308 to 317 (RRGRKSKRQK) has biased composition (basic residues). Residues 430-602 (QRPPVVTVMG…VLLTADASLD (173 aa)) enclose the tr-type G domain. Residues 439-446 (GHVDHGKT) are G1. Position 439–446 (439–446 (GHVDHGKT)) interacts with GTP. Residues 464 to 468 (GITQH) form a G2 region. The interval 489–492 (DTPG) is G3. GTP contacts are provided by residues 489-493 (DTPGH) and 543-546 (NKID). The interval 543–546 (NKID) is G4. Positions 579–581 (SAK) are G5.

The protein belongs to the TRAFAC class translation factor GTPase superfamily. Classic translation factor GTPase family. IF-2 subfamily.

It localises to the cytoplasm. One of the essential components for the initiation of protein synthesis. Protects formylmethionyl-tRNA from spontaneous hydrolysis and promotes its binding to the 30S ribosomal subunits. Also involved in the hydrolysis of GTP during the formation of the 70S ribosomal complex. In Corynebacterium urealyticum (strain ATCC 43042 / DSM 7109), this protein is Translation initiation factor IF-2.